The following is a 500-amino-acid chain: Pentatricopeptide repeat-containing protein At1g06580 (500 aa).

PPR repeat units lie at residues 78–112 (SIVDFSRLLIAIAKLNKYEAVISLFRHLEMLGISH), 113–147 (DLYSFTTLIDCFCRCARLSLALSCLGKMMKLGFEP), 148–182 (SIVTFGSLVNGFCHVNRFYEAMSLVDQIVGLGYEP), 183–217 (NVVIYNTIIDSLCEKGQVNTALDVLKHMKKMGIRP), 218–252 (DVVTYNSLITRLFHSGTWGVSARILSDMMRMGISP), 253–287 (DVITFSALIDVYGKEGQLLEAKKQYNEMIQRSVNP), 288–322 (NIVTYNSLINGLCIHGLLDEAKKVLNVLVSKGFFP), 323–357 (NAVTYNTLINGYCKAKRVDDGMKILCVMSRDGVDG), 358–392 (DTFTYNTLYQGYCQAGKFSAAEKVLGRMVSCGVHP), 393–427 (DMYTFNILLDGLCDHGKIGKALVRLEDLQKSKTVV), 428–462 (GIITYNIIIKGLCKADKVEDAWYLFCSLALKGVSP), and 463–498 (DVITYITMMIGLRRKRLWREAHELYRKMQKEDGLMP).

Belongs to the PPR family. P subfamily.

In Arabidopsis thaliana (Mouse-ear cress), this protein is Pentatricopeptide repeat-containing protein At1g06580.